The primary structure comprises 161 residues: uncharacterized protein (161 aa).

Disordered regions lie at residues 47-83 and 104-137; these read KPAKRNIHGHNNHTRSSNHPHSGAHSNINHNNNNNIN and RRLQQNGGGGDSSSSRSSNNNNSTNDNKPQSKNY. Positions 50-64 are enriched in basic residues; sequence KRNIHGHNNHTRSSN. Composition is skewed to low complexity over residues 73–83 and 115–130; these read NINHNNNNNIN and SSSSRSSNNNNSTNDN.

This is an uncharacterized protein from Dictyostelium discoideum (Social amoeba).